Consider the following 207-residue polypeptide: Urease accessory protein UreG (207 aa).

G14–T21 is a binding site for GTP.

Belongs to the SIMIBI class G3E GTPase family. UreG subfamily. As to quaternary structure, homodimer. UreD, UreF and UreG form a complex that acts as a GTP-hydrolysis-dependent molecular chaperone, activating the urease apoprotein by helping to assemble the nickel containing metallocenter of UreC. The UreE protein probably delivers the nickel.

It localises to the cytoplasm. In terms of biological role, facilitates the functional incorporation of the urease nickel metallocenter. This process requires GTP hydrolysis, probably effectuated by UreG. In Rhodopseudomonas palustris (strain BisB18), this protein is Urease accessory protein UreG.